The primary structure comprises 473 residues: Cannabinoid receptor 1 (473 aa).

Residues 1–117 are Extracellular-facing; the sequence is MKSILDGLAD…CFMILNPSQQ (117 aa). Residues 2 to 23 form a required for mitochondrial localization region; the sequence is KSILDGLADTTFRTITTDLLYV. N78 and N84 each carry an N-linked (GlcNAc...) asparagine glycan. The helical transmembrane segment at 118 to 143 threads the bilayer; the sequence is LAIAVLSLTLGTFTVLENLLVLCVIL. The Cytoplasmic portion of the chain corresponds to 144-155; that stretch reads HSRSLRCRPSYH. A helical membrane pass occupies residues 156-176; sequence FIGSLAVADLLGSVIFVYSFV. Topologically, residues 177–188 are extracellular; the sequence is DFHVFHRKDSPN. Residues 189 to 213 traverse the membrane as a helical segment; the sequence is VFLFKLGGVTASFTASVGSLFLTAI. Residues 214–233 are Cytoplasmic-facing; sequence DRYISIHRPLAYKRIVTRPK. Residues 234–256 traverse the membrane as a helical segment; sequence AVVAFCLMWTIAIVIAVLPLLGW. Topologically, residues 257 to 274 are extracellular; sequence NCKKLQSVCSDIFPLIDE. The helical transmembrane segment at 275–300 threads the bilayer; sequence TYLMFWIGVTSVLLLFIVYAYMYILW. Over 301 to 345 the chain is Cytoplasmic; sequence KAHSHAVRMIQRGTQKSIIIHTSEDGKVQVTRPDQARMDIRLAKT. Residues 346 to 366 traverse the membrane as a helical segment; sequence LVLILVVLIICWGPLLAIMVY. At 367-378 the chain is on the extracellular side; the sequence is DVFGKMNKLIKT. A helical membrane pass occupies residues 379–400; it reads VFAFCSMLCLLNSTVNPIIYAL. Topologically, residues 401 to 473 are cytoplasmic; it reads RSKDLRHAFR…VSTDTSAEAL (73 aa). C416 carries the S-palmitoyl cysteine lipid modification. A phosphoserine mark is found at S426 and S430.

The protein belongs to the G-protein coupled receptor 1 family. In terms of assembly, interacts (via C-terminus) with CNRIP1. Associates with G protein alpha subunits, including G(i) alpha-1/GNAI1, G(i) alpha-3/GNAI3 and G(o)-alpha/GNAO1; palmitoylation is important for interaction with GNAI3 and GNAO1. Post-translationally, palmitoylation at Cys-416 is important for recruitment at both plasma membrane and lipid rafts and association with G protein alpha subunits. Expressed in the brain, in the striatum, medial septum, descending arm of the band of Broca, the amygdaloid nucleus, the hippocampus and cortex (at protein level). High levels in the lateral striatum. In rostral brain regions, high expression levels in the dorsal lateral striatum, while in the caudal brain regions, high levels are observed in the ventral lateral striatum. Expressed in monocytes/macrophages (at protein level). Expressed in striated muscles and in vascular smooth muscles cells (at protein level).

It localises to the cell membrane. Its subcellular location is the mitochondrion outer membrane. The protein localises to the cell projection. The protein resides in the axon. It is found in the presynapse. With respect to regulation, hemopressin, a peptide derived from hemoglobin subunit alpha (HBA1 and/or HBA2), acts as an antagonist peptide: hemopressin-binding efficiently blocks cannabinoid receptor CNR1 and subsequent signaling. G-protein coupled receptor for cannabinoids, including endocannabinoids (eCBs), such as N-arachidonoylethanolamide (also called anandamide or AEA) and 2-arachidonoylglycerol (2-AG). Mediates many cannabinoid-induced effects, acting, among others, on food intake, memory loss, gastrointestinal motility, catalepsy, ambulatory activity, anxiety, chronic pain. Signaling typically involves reduction in cyclic AMP. In the hypothalamus, may have a dual effect on mitochondrial respiration depending upon the agonist dose and possibly upon the cell type. Increases respiration at low doses, while decreases respiration at high doses. At high doses, CNR1 signal transduction involves G-protein alpha-i protein activation and subsequent inhibition of mitochondrial soluble adenylate cyclase, decrease in cyclic AMP concentration, inhibition of protein kinase A (PKA)-dependent phosphorylation of specific subunits of the mitochondrial electron transport system, including NDUFS2. In the hypothalamus, inhibits leptin-induced reactive oxygen species (ROS) formation and mediates cannabinoid-induced increase in SREBF1 and FASN gene expression. In response to cannabinoids, drives the release of orexigenic beta-endorphin, but not that of melanocyte-stimulating hormone alpha/alpha-MSH, from hypothalamic POMC neurons, hence promoting food intake. In the hippocampus, regulates cellular respiration and energy production in response to cannabinoids. Involved in cannabinoid-dependent depolarization-induced suppression of inhibition (DSI), a process in which depolarization of CA1 postsynaptic pyramidal neurons mobilizes eCBs, which retrogradely activate presynaptic CB1 receptors, transiently decreasing GABAergic inhibitory neurotransmission. Also reduces excitatory synaptic transmission. In superior cervical ganglions and cerebral vascular smooth muscle cells, inhibits voltage-gated Ca(2+) channels in a constitutive, as well as agonist-dependent manner. Induces leptin production in adipocytes and reduces LRP2-mediated leptin clearance in the kidney, hence participating in hyperleptinemia. In adipose tissue, CNR1 signaling leads to increased expression of SREBF1, ACACA and FASN genes. In the liver, activation by endocannabinoids leads to increased de novo lipogenesis and reduced fatty acid catabolism, associated with increased expression of SREBF1/SREBP-1, GCK, ACACA, ACACB and FASN genes. May also affect de novo cholesterol synthesis and HDL-cholesteryl ether uptake. Peripherally modulates energy metabolism. In high carbohydrate diet-induced obesity, may decrease the expression of mitochondrial dihydrolipoyl dehydrogenase/DLD in striated muscles, as well as that of selected glucose/ pyruvate metabolic enzymes, hence affecting energy expenditure through mitochondrial metabolism. In response to cannabinoid anandamide, elicits a pro-inflammatory response in macrophages, which involves NLRP3 inflammasome activation and IL1B and IL18 secretion. In macrophages infiltrating pancreatic islets, this process may participate in the progression of type-2 diabetes and associated loss of pancreatic beta-cells. This Rattus norvegicus (Rat) protein is Cannabinoid receptor 1 (Cnr1).